The following is a 150-amino-acid chain: Large ribosomal subunit protein bL9 (150 aa).

Belongs to the bacterial ribosomal protein bL9 family.

In terms of biological role, binds to the 23S rRNA. The polypeptide is Large ribosomal subunit protein bL9 (Burkholderia vietnamiensis (strain G4 / LMG 22486) (Burkholderia cepacia (strain R1808))).